Reading from the N-terminus, the 130-residue chain is uncharacterized protein (130 aa).

Positions 1–19 are cleaved as a signal peptide; sequence MKVLGNILWWAFVGFMAYA.

This is an uncharacterized protein from Escherichia coli (strain K12).